A 688-amino-acid chain; its full sequence is Thyroid hormone-induced protein B (688 aa).

The N-terminal stretch at 1–20 (MMLSHWVLLLSLGAVWLAEG) is a signal peptide. 4 MAM domains span residues 26-169 (GSCT…GYCI), 170-330 (ECDF…SCSG), 341-500 (AGCD…SCKI), and 509-669 (GKCT…PCND). N-linked (GlcNAc...) asparagine glycans are attached at residues N32 and N135. N-linked (GlcNAc...) asparagine glycans are attached at residues N358 and N668.

It is found in the membrane. The protein resides in the secreted. It localises to the extracellular space. This Xenopus laevis (African clawed frog) protein is Thyroid hormone-induced protein B.